The primary structure comprises 421 residues: DNA (cytosine-5)-methyltransferase 3-like (421 aa).

Positions 1-14 (MGSRETPSSCSKTL) are enriched in polar residues. Residues 1-39 (MGSRETPSSCSKTLETLDLETSDSSSPDADSPLEEQWLK) are disordered. The 133-residue stretch at 75-207 (EVKVNRRSIE…LKAFHDQEGA (133 aa)) folds into the ADD domain. Residues 86–116 (ICLCCGTLQVYTRHPLFEGGLCAPCKDKFLE) form a GATA-type; atypical zinc finger. The PHD-type; atypical zinc finger occupies 127-183 (QSYCTICCSGGTLFICESPDCTRCYCFECVDILVGPGTSERINAMACWVCFLCLPFS).

Homodimer. Heterotetramer composed of 1 DNMT3A homodimer and 2 DNMT3L subunits (DNMT3L-DNMT3A-DNMT3A-DNMT3L). Interacts with histone H3 (via N-terminus); interaction is strongly inhibited by methylation at lysine 4 (H3K4me). Interacts with EZH2; the interaction is direct. Interacts with SPOCD1. Expressed in testis, thymus, ovary, and heart.

The protein localises to the nucleus. In terms of biological role, catalytically inactive regulatory factor of DNA methyltransferases that can either promote or inhibit DNA methylation depending on the context. Essential for the function of DNMT3A and DNMT3B: activates DNMT3A and DNMT3B by binding to their catalytic domain. Acts by accelerating the binding of DNA and S-adenosyl-L-methionine (AdoMet) to the methyltransferases and dissociates from the complex after DNA binding to the methyltransferases. Recognizes unmethylated histone H3 lysine 4 (H3K4me0) and induces de novo DNA methylation by recruitment or activation of DNMT3. Plays a key role in embryonic stem cells and germ cells. In germ cells, required for the methylation of imprinted loci together with DNMT3A. In male germ cells, specifically required to methylate retrotransposons, preventing their mobilization. Plays a key role in embryonic stem cells (ESCs) by acting both as an positive and negative regulator of DNA methylation. While it promotes DNA methylation of housekeeping genes together with DNMT3A and DNMT3B, it also acts as an inhibitor of DNA methylation at the promoter of bivalent genes. Interacts with the EZH2 component of the PRC2/EED-EZH2 complex, preventing interaction of DNMT3A and DNMT3B with the PRC2/EED-EZH2 complex, leading to maintain low methylation levels at the promoters of bivalent genes. Promotes differentiation of ESCs into primordial germ cells by inhibiting DNA methylation at the promoter of RHOX5, thereby activating its expression. The sequence is that of DNA (cytosine-5)-methyltransferase 3-like (Dnmt3l) from Mus musculus (Mouse).